A 649-amino-acid polypeptide reads, in one-letter code: Glycerol-3-phosphate dehydrogenase, mitochondrial (649 aa).

69–97 provides a ligand contact to FAD; the sequence is DVLIIGGGATGTGVAVDASTRGLNVCLLE.

The protein belongs to the FAD-dependent glycerol-3-phosphate dehydrogenase family. The cofactor is FAD.

It is found in the mitochondrion. The enzyme catalyses a quinone + sn-glycerol 3-phosphate = dihydroxyacetone phosphate + a quinol. The protein operates within polyol metabolism; glycerol degradation via glycerol kinase pathway; glycerone phosphate from sn-glycerol 3-phosphate (anaerobic route): step 1/1. The polypeptide is Glycerol-3-phosphate dehydrogenase, mitochondrial (gut2) (Schizosaccharomyces pombe (strain 972 / ATCC 24843) (Fission yeast)).